Here is a 211-residue protein sequence, read N- to C-terminus: N-(5'-phosphoribosyl)anthranilate isomerase (211 aa).

Belongs to the TrpF family.

The catalysed reaction is N-(5-phospho-beta-D-ribosyl)anthranilate = 1-(2-carboxyphenylamino)-1-deoxy-D-ribulose 5-phosphate. The protein operates within amino-acid biosynthesis; L-tryptophan biosynthesis; L-tryptophan from chorismate: step 3/5. This chain is N-(5'-phosphoribosyl)anthranilate isomerase, found in Zymomonas mobilis subsp. pomaceae (strain ATCC 29192 / DSM 22645 / JCM 10191 / CCUG 17912 / NBRC 13757 / NCIMB 11200 / NRRL B-4491 / Barker I).